An 868-amino-acid chain; its full sequence is Protein translocase subunit SecA (868 aa).

ATP is bound by residues Gln-88, 106–110 (GEGKT), and Asp-509. The span at 816 to 827 (NAENEPLNYNNQ) shows a compositional bias: polar residues. The segment at 816 to 868 (NAENEPLNYNNQGEDENFTPEKKIPRNAPCPCGSGKKYKDCHGKSGPKKGIFA) is disordered. Residues Cys-845, Cys-847, Cys-856, and His-857 each contribute to the Zn(2+) site.

Belongs to the SecA family. In terms of assembly, monomer and homodimer. Part of the essential Sec protein translocation apparatus which comprises SecA, SecYEG and auxiliary proteins SecDF-YajC and YidC. Zn(2+) serves as cofactor.

The protein localises to the cell inner membrane. The protein resides in the cytoplasm. It carries out the reaction ATP + H2O + cellular proteinSide 1 = ADP + phosphate + cellular proteinSide 2.. Functionally, part of the Sec protein translocase complex. Interacts with the SecYEG preprotein conducting channel. Has a central role in coupling the hydrolysis of ATP to the transfer of proteins into and across the cell membrane, serving as an ATP-driven molecular motor driving the stepwise translocation of polypeptide chains across the membrane. The polypeptide is Protein translocase subunit SecA (Campylobacter concisus (strain 13826)).